The sequence spans 230 residues: Endonuclease NucS (230 aa).

Belongs to the NucS endonuclease family.

Its subcellular location is the cytoplasm. In terms of biological role, cleaves both 3' and 5' ssDNA extremities of branched DNA structures. This is Endonuclease NucS from Corynebacterium aurimucosum (strain ATCC 700975 / DSM 44827 / CIP 107346 / CN-1) (Corynebacterium nigricans).